Here is a 234-residue protein sequence, read N- to C-terminus: Leucyl/phenylalanyl-tRNA--protein transferase (234 aa).

This sequence belongs to the L/F-transferase family.

Its subcellular location is the cytoplasm. The enzyme catalyses N-terminal L-lysyl-[protein] + L-leucyl-tRNA(Leu) = N-terminal L-leucyl-L-lysyl-[protein] + tRNA(Leu) + H(+). It catalyses the reaction N-terminal L-arginyl-[protein] + L-leucyl-tRNA(Leu) = N-terminal L-leucyl-L-arginyl-[protein] + tRNA(Leu) + H(+). It carries out the reaction L-phenylalanyl-tRNA(Phe) + an N-terminal L-alpha-aminoacyl-[protein] = an N-terminal L-phenylalanyl-L-alpha-aminoacyl-[protein] + tRNA(Phe). In terms of biological role, functions in the N-end rule pathway of protein degradation where it conjugates Leu, Phe and, less efficiently, Met from aminoacyl-tRNAs to the N-termini of proteins containing an N-terminal arginine or lysine. This chain is Leucyl/phenylalanyl-tRNA--protein transferase, found in Nitratidesulfovibrio vulgaris (strain ATCC 29579 / DSM 644 / CCUG 34227 / NCIMB 8303 / VKM B-1760 / Hildenborough) (Desulfovibrio vulgaris).